We begin with the raw amino-acid sequence, 202 residues long: Casparian strip membrane protein 1 (202 aa).

Over 1–42 the chain is Cytoplasmic; it reads MEKNKSTAIEIAESSKESKGKAPLLAAAVGHDRAAGYKRGVS. Residues 43–63 traverse the membrane as a helical segment; that stretch reads IFDLFLRISAATAALAATIVM. Residues 64–90 lie on the Extracellular side of the membrane; the sequence is GTTEQTLPFFTQFFQFRAQYDDLPTFT. Residues 91–111 form a helical membrane-spanning segment; the sequence is FFVVGMAIVTGYLILSVPFSI. Residues 112 to 130 are Cytoplasmic-facing; it reads VCIARPVAIGPRFLLIVGD. The helical transmembrane segment at 131–151 threads the bilayer; that stretch reads TLKAVLATSAAGSSAAIVYLA. The Extracellular portion of the chain corresponds to 152-173; it reads HNGNSDANWLDICQQFNDFCQR. Residues 174-194 form a helical membrane-spanning segment; the sequence is VSGAVVAAFVAVVLLIFLIVL. Residues 195–202 are Cytoplasmic-facing; sequence SAMALRKN.

It belongs to the Casparian strip membrane proteins (CASP) family. Homodimer and heterodimers.

The protein resides in the cell membrane. Functionally, regulates membrane-cell wall junctions and localized cell wall deposition. Required for establishment of the Casparian strip membrane domain (CSD) and the subsequent formation of Casparian strips, a cell wall modification of the root endodermis that determines an apoplastic barrier between the intraorganismal apoplasm and the extraorganismal apoplasm and prevents lateral diffusion. The sequence is that of Casparian strip membrane protein 1 from Striga hermonthica (Purple witchweed).